We begin with the raw amino-acid sequence, 968 residues long: MKYLVSVGAGPARRAGGLEDVSWGPRVSRRPQSYRAARHVNESLPRSAFRVPAAHGASVTPSAALGSGLPETQPEAVCRGTEKPRFAEGCKPAASRDKNVLAKALYDNVAESPDELSFRKGDIMTVLERDTQGLDGWWLCSLHGRQGIVPGNRLKILVGMYDKKPAAPGPGPPATPPQPQPSLPQGVHTPVPPASQYSPMLPTAYQPQPDNVYLVPTPSKTQQGLYQAPGPNPQFQSPPAKQTSTFSKQTPHHSFPSPATDLYQVPPGPGSPAQDIYQVPPSAGTGHDIYQVPPSLDTRSWEGTKPPAKVVVPTRVGQGYVYEASQAEQDEYDTPRHLLAPGSQDIYDVPPVRGLLPNQYGQEVYDTPPMAVKGPNGRDPLLDVYDVPPSVEKGLPPSNHHSVYDVPPSVSKDVPDGPLLREETYDVPPAFAKPKPFDPTRHPLILAAPPPDSPPAEDVYDVPPPAPDLYDVPPGLRRPGPGTLYDVPRERVLPPEVADGSVIDDGVYAVPPPAEREAPTDGKRLSASSTGSTRSSQSASSLEVVVPGREPLELEVAVETLARLQQGVSTTVAHLLDLVGSASGPGGWRSTSEPQEPPVQDLKAAVAAVHGAVHELLEFARSAVSSATHTSDRTLHAKLSRQLQKMEDVYQTLVVHGQVLDSGRGGPGFTLDDLDRLVACSRAVPEDAKQLASFLHGNASLLFRRTKAPGPGPEGSSSLHLNPTDKASSIQSRPLPSPPKFTSQDSPDGQYENSEGGWMEDYDYVHLQGKEEFEKTQKELLEKGNIVRQGKGQLELQQLKQFERLEQEVSRPIDHDLANWTPAQPLVPGRTGGLGPSDRQLLLFYLEQCEANLTTLTDAVDAFFTAVATNQPPKIFVAHSKFVILSAHKLVFIGDTLSRQAKAADVRSKVTHYSNLLCDLLRGIVATTKAAALQYPSPSAAQDMVDRVKELGHSTQQFRRVLGQLAAA.

At M1 the chain carries N-acetylmethionine. Positions 97 to 159 (DKNVLAKALY…PGNRLKILVG (63 aa)) constitute an SH3 domain. The interval 164 to 277 (KPAAPGPGPP…GPGSPAQDIY (114 aa)) is disordered. Pro residues predominate over residues 167-182 (APGPGPPATPPQPQPS). The segment at 213–514 (YLVPTPSKTQ…DGVYAVPPPA (302 aa)) is substrate for kinases. A Phosphotyrosine; by SRC modification is found at Y226. Over residues 233 to 249 (PQFQSPPAKQTSTFSKQ) the composition is skewed to polar residues. At S237 the chain carries Phosphoserine. Phosphotyrosine is present on Y332. Residue Y347 is modified to Phosphotyrosine; by ABL1. T367 is modified (phosphothreonine). S390 is subject to Phosphoserine. Positions 393–416 (KGLPPSNHHSVYDVPPSVSKDVPD) are disordered. Y460, Y470, and Y508 each carry phosphotyrosine. Disordered regions lie at residues 503–544 (IDDG…SLEV) and 705–756 (RTKA…NSEG). Residues 514 to 524 (AEREAPTDGKR) are compositionally biased toward basic and acidic residues. Over residues 525–542 (LSASSTGSTRSSQSASSL) the composition is skewed to low complexity. Residues S526, S535, and S737 each carry the phosphoserine modification. Positions 715–753 (GSSSLHLNPTDKASSIQSRPLPSPPKFTSQDSPDGQYEN) are enriched in polar residues. Positions 733–741 (RPLPSPPKF) match the SH3-binding motif. The divergent helix-loop-helix motif stretch occupies residues 844–894 (FYLEQCEANLTTLTDAVDAFFTAVATNQPPKIFVAHSKFVILSAHKLVFIG).

This sequence belongs to the CAS family. Forms complexes in vivo with PTK2/FAK1, adapter protein CRKL and LYN kinase. Can heterodimerize with NEDD9. Component of a complex comprised of SH2D3C, BCAR1/CAS, and CRK. Within the complex, interacts with SH2D3C (via C-terminus), and CRK. Part of a complex comprised of PTPRA, BCAR1, BCAR3 (via SH2 domain) and SRC; the formation of the complex is dependent on integrin mediated-tyrosine phosphorylation of PTPRA. Interacts with BCAR3 (via Ras-GEF domain); the interaction regulates adhesion-dependent serine phosphorylation. Interacts with SMAD2 and SMAD3. Interacts with NPHP1. Interacts with PTK2B/PYK2. Interacts (via C-terminus) with SH2D3C/CHAT isoform 2 (via C-terminus). Interacts with activated CSPG4. Interacts with BMX, INPPL1/SHIP2 and PEAK1. Part of a collagen stimulated complex involved in cell migration composed of CDC42, CRK, TNK2 and BCAR1/p130cas. Interacts with TNK2 via SH3 domains. Interacts with PTK2B/PYK2. Interacts (when tyrosine-phosphorylated) with tensin TNS1; the interaction is increased by phosphorylation of TNS1. In terms of processing, PTK2/FAK1 activation mediates phosphorylation at the YDYVHL motif; phosphorylation is most likely catalyzed by SRC family members. SRC-family kinases are recruited to the phosphorylated sites and can phosphorylate other tyrosine residues. Tyrosine phosphorylation is triggered by integrin mediated adhesion of cells to the extracellular matrix. Phosphorylated by SRC kinase in a EDN1- and PTK2B-mediated manner; phosphorylation strengthens its interaction with BCAR3 as part of the PTK2B/BCAR1/BCAR3/RAP1 signaling pathway. Post-translationally, dephosphorylated by PTPN14 at Tyr-226. Widely expressed. Higher expression in lung, intestine and testis.

Its subcellular location is the cell junction. The protein localises to the focal adhesion. The protein resides in the cytoplasm. It localises to the cell projection. It is found in the axon. Its function is as follows. Docking protein which plays a central coordinating role for tyrosine-kinase-based signaling related to cell adhesion. Implicated in induction of cell migration and cell branching. Involved in the BCAR3-mediated inhibition of TGFB signaling. The sequence is that of Breast cancer anti-estrogen resistance protein 1 (Bcar1) from Rattus norvegicus (Rat).